We begin with the raw amino-acid sequence, 107 residues long: Translation initiation factor IF-1, chloroplastic (107 aa).

The region spanning 8 to 83 is the S1-like domain; it reads REKKNPREAK…SKGRIIYRLP (76 aa).

It belongs to the IF-1 family. Component of the 30S ribosomal translation pre-initiation complex which assembles on the 30S ribosome in the order IF-2 and IF-3, IF-1 and N-formylmethionyl-tRNA(fMet); mRNA recruitment can occur at any time during PIC assembly.

The protein resides in the plastid. It is found in the chloroplast. In terms of biological role, one of the essential components for the initiation of protein synthesis. Stabilizes the binding of IF-2 and IF-3 on the 30S subunit to which N-formylmethionyl-tRNA(fMet) subsequently binds. Helps modulate mRNA selection, yielding the 30S pre-initiation complex (PIC). Upon addition of the 50S ribosomal subunit IF-1, IF-2 and IF-3 are released leaving the mature 70S translation initiation complex. The protein is Translation initiation factor IF-1, chloroplastic of Lolium perenne (Perennial ryegrass).